The primary structure comprises 121 residues: Large ribosomal subunit protein bL19 (121 aa).

This sequence belongs to the bacterial ribosomal protein bL19 family.

In terms of biological role, this protein is located at the 30S-50S ribosomal subunit interface and may play a role in the structure and function of the aminoacyl-tRNA binding site. The sequence is that of Large ribosomal subunit protein bL19 from Bifidobacterium adolescentis (strain ATCC 15703 / DSM 20083 / NCTC 11814 / E194a).